The following is a 555-amino-acid chain: MAQFVYTMHRVGKVVPPKRHILKNISLSFFPGAKIGVLGLNGAGKSTLLRIMAGIDKDIEGEARPQPDIKIGYLPQEPQLNPEHTVRESIEEAVSEVVNALKRLDEVYALYADPDADFDKLAAEQGRLEEIIQAHDGHNLNVQLERAADALRLPDWDAKIANLSGGERRRVALCRLLLEKPDMLLLDEPTNHLDAESVAWLERFLHDFEGTVVAITHDRYFLDNVAGWILELDRGEGIPWEGNYSSWLEQKDQRLAQEASQEAARRKSIEKELEWVRQGTKGRQSKGKARLARFEELNSTEYQKRNETNELFIPPGPRLGDKVLEVSNLRKSYGDRLLIDSLSFSIPKGAIVGIIGPNGAGKSTLFRMISGQEQPDSGTITLGETVKLASVDQFRDSMDNSKTVWEEVSGGLDIMKIGNTEMPSRAYVGRFNFKGVDQGKRVGELSGGERGRLHLAKLLQVGGNMLLLDEPTNDLDIETLRALENALLEFPGCAMVISHDRWFLDRIATHILDYQDEGKVEFFEGNFTEYEEYKKRTLGADALEPKRIKYKRIAK.

ABC transporter domains lie at 6–259 and 324–550; these read YTMH…AQEA and LEVS…RIKY. 39–46 contributes to the ATP binding site; the sequence is GLNGAGKS. The tract at residues 95–139 is arm; that stretch reads SEVVNALKRLDEVYALYADPDADFDKLAAEQGRLEEIIQAHDGHN. Residues 242 to 322 form a ptIM region; it reads GNYSSWLEQK…IPPGPRLGDK (81 aa). An ATP-binding site is contributed by 356 to 363; sequence GPNGAGKS.

The protein belongs to the ABC transporter superfamily. ABCF family. Translational throttle EttA subfamily. In terms of assembly, monomer. Probably contacts ribosomal proteins L1, L5, L33 and S7, the 16S and 23S rRNA and the P-site containing tRNA(fMet).

It is found in the cytoplasm. The enzyme catalyses ATP + H2O = ADP + phosphate + H(+). Functionally, a translation factor that gates the progression of the 70S ribosomal initiation complex (IC, containing tRNA(fMet) in the P-site) into the translation elongation cycle by using a mechanism sensitive to the ATP/ADP ratio. Binds to the 70S ribosome E-site where it modulates the state of the translating ribosome during subunit translocation. ATP hydrolysis probably frees it from the ribosome, which can enter the elongation phase. The sequence is that of Energy-dependent translational throttle protein EttA from Escherichia coli O6:H1 (strain CFT073 / ATCC 700928 / UPEC).